The following is a 607-amino-acid chain: CUB and zona pellucida-like domain-containing protein 1 (607 aa).

Residues 1–19 form the signal peptide; sequence MEVTGRLFIWAILAVSCRA. Topologically, residues 20 to 568 are lumenal; it reads QLNSTAAEGR…AEISKQPLSH (549 aa). N22 carries N-linked (GlcNAc...) asparagine glycosylation. An intrachain disulfide couples C32 to C58. CUB domains lie at 32-146 and 154-265; these read CTAS…YFFS and CGGY…YAST. N67 is a glycosylation site (N-linked (GlcNAc...) asparagine). 2 cysteine pairs are disulfide-bonded: C85–C107 and C154–C180. N195 carries an N-linked (GlcNAc...) asparagine glycan. A disulfide bridge connects residues C207 and C229. The region spanning 276-519 is the ZP domain; that stretch reads SCASDKMRVI…SRCNQGCVSR (244 aa). Residue N419 is glycosylated (N-linked (GlcNAc...) asparagine). C442 and C498 are oxidised to a cystine. A helical membrane pass occupies residues 569–589; that stretch reads LHLFSFMVLALNVVIVVTATV. Residues 590–607 lie on the Cytoplasmic side of the membrane; the sequence is RHFLNRWKDHGYQKLQVY.

Expressed predominantly in epithelium of uterus and oviduct.

The protein resides in the zymogen granule membrane. Its function is as follows. Localized to zymogen granules, where it functions in trypsinogen activation. May indirectly regulate cell motility, cell-cell and cell/extracellular matrix interactions. The chain is CUB and zona pellucida-like domain-containing protein 1 from Rattus norvegicus (Rat).